A 153-amino-acid polypeptide reads, in one-letter code: Putative transcription factor YdeB (153 aa).

It belongs to the CarD family.

This is Putative transcription factor YdeB (ydeB) from Bacillus subtilis (strain 168).